Consider the following 806-residue polypeptide: Centrosomal protein of 85 kDa-like (806 aa).

3 disordered regions span residues 1–27 (MWGR…AGSD), 51–89 (NNHL…LSFK), and 101–146 (HVMP…SSLD). A Phosphoserine modification is found at S15. Over residues 60–74 (TSDSGDTGIGTSCSD) the composition is skewed to polar residues. Basic and acidic residues predominate over residues 135 to 146 (DHSRGERDSSLD). Residue S207 is modified to Phosphoserine. The disordered stretch occupies residues 308–353 (PLEGRTTDDSYSLAPWQQPQTEEFQQGSETPMQVLTGSSRQSYSPP). Over residues 322–351 (PWQQPQTEEFQQGSETPMQVLTGSSRQSYS) the composition is skewed to polar residues. Residues 442 to 644 (QEELEQKLAS…ILEIQSMQGK (203 aa)) are a coiled coil.

Belongs to the CEP85 family.

The protein localises to the cytoplasm. The protein resides in the cytoskeleton. Its subcellular location is the microtubule organizing center. It is found in the centrosome. Functionally, plays an essential role in neuronal cell migration. The polypeptide is Centrosomal protein of 85 kDa-like (Mus musculus (Mouse)).